The sequence spans 253 residues: Shikimate dehydrogenase (NADP(+)) (253 aa).

Shikimate contacts are provided by residues 13-15 (SIS) and Thr59. The active-site Proton acceptor is Lys63. Glu74 provides a ligand contact to NADP(+). Shikimate is bound by residues Asn83 and Asp94. Residues 115–119 (GAGGA), 139–144 (NRTIER), and Val199 contribute to the NADP(+) site. Tyr201 serves as a coordination point for shikimate. Gly221 contributes to the NADP(+) binding site.

Belongs to the shikimate dehydrogenase family. Homodimer.

The enzyme catalyses shikimate + NADP(+) = 3-dehydroshikimate + NADPH + H(+). It functions in the pathway metabolic intermediate biosynthesis; chorismate biosynthesis; chorismate from D-erythrose 4-phosphate and phosphoenolpyruvate: step 4/7. Involved in the biosynthesis of the chorismate, which leads to the biosynthesis of aromatic amino acids. Catalyzes the reversible NADPH linked reduction of 3-dehydroshikimate (DHSA) to yield shikimate (SA). The chain is Shikimate dehydrogenase (NADP(+)) from Thermotoga maritima (strain ATCC 43589 / DSM 3109 / JCM 10099 / NBRC 100826 / MSB8).